Reading from the N-terminus, the 465-residue chain is ATP synthase subunit beta (465 aa).

Residue 148–155 coordinates ATP; that stretch reads GGAGVGKT.

The protein belongs to the ATPase alpha/beta chains family. As to quaternary structure, F-type ATPases have 2 components, CF(1) - the catalytic core - and CF(0) - the membrane proton channel. CF(1) has five subunits: alpha(3), beta(3), gamma(1), delta(1), epsilon(1). CF(0) has three main subunits: a(1), b(2) and c(9-12). The alpha and beta chains form an alternating ring which encloses part of the gamma chain. CF(1) is attached to CF(0) by a central stalk formed by the gamma and epsilon chains, while a peripheral stalk is formed by the delta and b chains.

The protein resides in the cell inner membrane. The catalysed reaction is ATP + H2O + 4 H(+)(in) = ADP + phosphate + 5 H(+)(out). Its function is as follows. Produces ATP from ADP in the presence of a proton gradient across the membrane. The catalytic sites are hosted primarily by the beta subunits. The sequence is that of ATP synthase subunit beta from Chromobacterium violaceum (strain ATCC 12472 / DSM 30191 / JCM 1249 / CCUG 213 / NBRC 12614 / NCIMB 9131 / NCTC 9757 / MK).